The primary structure comprises 558 residues: Formate--tetrahydrofolate ligase (558 aa).

66–73 (TPAGEGKT) is a binding site for ATP.

The protein belongs to the formate--tetrahydrofolate ligase family.

It catalyses the reaction (6S)-5,6,7,8-tetrahydrofolate + formate + ATP = (6R)-10-formyltetrahydrofolate + ADP + phosphate. It functions in the pathway one-carbon metabolism; tetrahydrofolate interconversion. This is Formate--tetrahydrofolate ligase from Neisseria meningitidis serogroup C (strain 053442).